We begin with the raw amino-acid sequence, 603 residues long: Elongation factor 4 (603 aa).

In terms of domain architecture, tr-type G spans 6–188; the sequence is KYVRNFSIIA…DIVKNVPAPI (183 aa). GTP-binding positions include 18 to 23 and 135 to 138; these read DHGKST and NKID.

Belongs to the TRAFAC class translation factor GTPase superfamily. Classic translation factor GTPase family. LepA subfamily.

It localises to the cell membrane. The catalysed reaction is GTP + H2O = GDP + phosphate + H(+). Functionally, required for accurate and efficient protein synthesis under certain stress conditions. May act as a fidelity factor of the translation reaction, by catalyzing a one-codon backward translocation of tRNAs on improperly translocated ribosomes. Back-translocation proceeds from a post-translocation (POST) complex to a pre-translocation (PRE) complex, thus giving elongation factor G a second chance to translocate the tRNAs correctly. Binds to ribosomes in a GTP-dependent manner. This is Elongation factor 4 from Finegoldia magna (strain ATCC 29328 / DSM 20472 / WAL 2508) (Peptostreptococcus magnus).